A 74-amino-acid polypeptide reads, in one-letter code: U5-theraphotoxin-Cg1a (74 aa).

The N-terminal stretch at 1–19 is a signal peptide; the sequence is MNATIFALLLLLNLAMYNA. Positions 20 to 39 are excised as a propeptide; sequence AEQSSETDMDDTLLIPENYR. Disulfide bonds link cysteine 42–cysteine 56, cysteine 49–cysteine 61, and cysteine 55–cysteine 71.

The protein belongs to the neurotoxin 36 family. 01 subfamily. Expressed by the venom gland.

The protein resides in the secreted. Functionally, probable ion channel inhibitor. This is U5-theraphotoxin-Cg1a from Chilobrachys guangxiensis (Chinese earth tiger tarantula).